Here is a 299-residue protein sequence, read N- to C-terminus: Protoheme IX farnesyltransferase (299 aa).

9 helical membrane passes run 26–46 (VNAL…PDGL), 53–73 (FAAT…NCLI), 94–114 (LHSV…LSVL), 121–141 (LTMW…TLLL), 149–169 (IVIG…AVSG), 175–195 (ALLL…SLAL), 217–239 (YTRL…PFAI), 243–265 (GWIY…WRLL), and 277–297 (FRFS…DHYL).

It belongs to the UbiA prenyltransferase family. Protoheme IX farnesyltransferase subfamily.

It is found in the cell inner membrane. It catalyses the reaction heme b + (2E,6E)-farnesyl diphosphate + H2O = Fe(II)-heme o + diphosphate. Its pathway is porphyrin-containing compound metabolism; heme O biosynthesis; heme O from protoheme: step 1/1. In terms of biological role, converts heme B (protoheme IX) to heme O by substitution of the vinyl group on carbon 2 of heme B porphyrin ring with a hydroxyethyl farnesyl side group. In Azoarcus sp. (strain BH72), this protein is Protoheme IX farnesyltransferase.